A 160-amino-acid chain; its full sequence is Cytochrome b6-f complex subunit 4 (160 aa).

3 helical membrane passes run 36 to 56 (LLYIFPVVILGTIACNVGLAV), 95 to 115 (LLGVLLMASVPAGLLTVPFLE), and 131 to 151 (TVFLVGTVVALWLGIGATLPI).

The protein belongs to the cytochrome b family. PetD subfamily. As to quaternary structure, the 4 large subunits of the cytochrome b6-f complex are cytochrome b6, subunit IV (17 kDa polypeptide, petD), cytochrome f and the Rieske protein, while the 4 small subunits are petG, petL, petM and petN. The complex functions as a dimer.

The protein resides in the plastid. It localises to the chloroplast thylakoid membrane. Its function is as follows. Component of the cytochrome b6-f complex, which mediates electron transfer between photosystem II (PSII) and photosystem I (PSI), cyclic electron flow around PSI, and state transitions. This is Cytochrome b6-f complex subunit 4 from Spinacia oleracea (Spinach).